Consider the following 337-residue polypeptide: Glyceraldehyde-3-phosphate dehydrogenase (337 aa).

Residues 13–14 (RI), aspartate 35, and arginine 80 each bind NAD(+). Residues 151 to 153 (SCT), threonine 182, 211 to 212 (TG), and arginine 234 each bind D-glyceraldehyde 3-phosphate. The active-site Nucleophile is cysteine 152. Asparagine 316 serves as a coordination point for NAD(+).

The protein belongs to the glyceraldehyde-3-phosphate dehydrogenase family. Homotetramer.

The protein localises to the cytoplasm. It catalyses the reaction D-glyceraldehyde 3-phosphate + phosphate + NAD(+) = (2R)-3-phospho-glyceroyl phosphate + NADH + H(+). The protein operates within carbohydrate degradation; glycolysis; pyruvate from D-glyceraldehyde 3-phosphate: step 1/5. In Monascus purpureus (Red mold), this protein is Glyceraldehyde-3-phosphate dehydrogenase (GPD1).